A 162-amino-acid polypeptide reads, in one-letter code: Phosphopantetheine adenylyltransferase (162 aa).

Thr-14 is a binding site for substrate. Residues 14 to 15 and His-22 each bind ATP; that span reads TF. The substrate site is built by Lys-46, Leu-78, and Arg-92. ATP contacts are provided by residues 93–95, Glu-103, and 128–134; these read GLR and HSFISSS.

Belongs to the bacterial CoaD family. Homohexamer. It depends on Mg(2+) as a cofactor.

The protein localises to the cytoplasm. The catalysed reaction is (R)-4'-phosphopantetheine + ATP + H(+) = 3'-dephospho-CoA + diphosphate. Its pathway is cofactor biosynthesis; coenzyme A biosynthesis; CoA from (R)-pantothenate: step 4/5. Functionally, reversibly transfers an adenylyl group from ATP to 4'-phosphopantetheine, yielding dephospho-CoA (dPCoA) and pyrophosphate. The protein is Phosphopantetheine adenylyltransferase of Xylella fastidiosa (strain M23).